The sequence spans 447 residues: Polyamine export protein (447 aa).

The Cytoplasmic segment spans residues 1–4 (MLNS). In terms of domain architecture, CNNM transmembrane spans 1–197 (MLNSIFIIFC…ALAGVLRKQE (197 aa)). The helical transmembrane segment at 5–25 (IFIIFCLIAVSAFFSISEISL) threads the bilayer. Over 26–54 (AASRKIKLKLLADEGSINAQRVLKMQENP) the chain is Periplasmic. A helical membrane pass occupies residues 55 to 75 (GMFFTVVQIGLNAVAILGGIV). Residues 76–99 (GDAAFSPAFSALFSHYMSPELSEQ) lie on the Cytoplasmic side of the membrane. A helical transmembrane segment spans residues 100-120 (LSFILSFSLVTGLFILFADLT). Over 121-141 (PKRIGMIAPEAVALRIINPMR) the chain is Periplasmic. Residues 142–162 (FCLFVFRPLVWLFNGMANNIF) traverse the membrane as a helical segment. The Cytoplasmic segment spans residues 163-447 (RLFKIPMVRK…DAQGKEDSAA (285 aa)). CBS domains follow at residues 216–275 (MTSR…NQSM) and 282–343 (QIRN…GLEE).

The protein belongs to the UPF0053 family. PaeA subfamily.

It localises to the cell inner membrane. In terms of biological role, involved in cadaverine and putrescine tolerance in stationary phase. May facilitate the efflux of both cadaverine and putrescine from the cytoplasm, reducing potentially toxic levels under certain stress conditions. This chain is Polyamine export protein, found in Salmonella typhimurium (strain 14028s / SGSC 2262).